Reading from the N-terminus, the 1174-residue chain is Tight junction protein 2 (1174 aa).

The PDZ 1 domain maps to 10-97; the sequence is TVTLQKDSKR…IAAIVVKRPR (88 aa). A phosphoserine mark is found at serine 107, serine 127, serine 130, serine 140, serine 145, serine 147, serine 151, serine 173, serine 195, and serine 217. The span at 125–137 shows a compositional bias: basic and acidic residues; the sequence is GRSARSGYSERSR. The segment at 125-290 is disordered; sequence GRSARSGYSE…AGQPDSDRPI (166 aa). Basic and acidic residues predominate over residues 146-214; that stretch reads RSWEDSPERG…DYGRPGERSH (69 aa). A compositionally biased stretch (basic and acidic residues) spans 220–235; that stretch reads RGYDRGYDRGYDRGYD. The residue at position 239 (serine 239) is a Phosphoserine. 2 stretches are compositionally biased toward basic and acidic residues: residues 243–266 and 274–288; these read EYGR…EHLR and LRGR…DSDR. The 79-residue stretch at 291–369 folds into the PDZ 2 domain; sequence GVLLMKSKAN…KLQLVVLRDS (79 aa). Residues serine 309, serine 382, serine 384, serine 390, serine 399, serine 408, serine 414, and serine 415 each carry the phosphoserine modification. The disordered stretch occupies residues 391–430; sequence EIESNRSFSPEERRQQYSDYDYHSSNEKLKERPNSREDMQ. The span at 399–430 shows a compositional bias: basic and acidic residues; sequence SPEERRQQYSDYDYHSSNEKLKERPNSREDMQ. The residue at position 439 (threonine 439) is a Phosphothreonine. The segment at 456–490 is disordered; sequence ENSKEPRYQEEPPAPQPKAAPRTFLRPSPEDEAIY. Phosphoserine is present on serine 483. In terms of domain architecture, PDZ 3 spans 493–574; sequence NTKMVRFKKG…GEMVTILAQS (82 aa). Tyrosine 558 carries the phosphotyrosine modification. The SH3 domain occupies 588–653; that stretch reads GDSFFIRSHF…PNKSRAEQMA (66 aa). The region spanning 679–860 is the Guanylate kinase-like domain; it reads MKKNLRKSRE…WFGSLKDTIQ (182 aa). Phosphoserine is present on residues serine 686 and serine 886. Phosphothreonine is present on threonine 889. Residues serine 897 and serine 904 each carry the phosphoserine modification. 2 disordered regions span residues 904–1065 and 1100–1174; these read SDFE…VLGK and DIYA…DTEL. Phosphothreonine occurs at positions 909 and 917. The span at 940 to 951 shows a compositional bias: basic and acidic residues; sequence VQHEESIRKPSP. Residues serine 950, serine 962, serine 970, serine 990, and serine 1052 each carry the phosphoserine modification. Positions 978–1000 are enriched in basic and acidic residues; sequence EPPKAKTQNREESFDISRSHDYK. Acidic residues predominate over residues 1044–1056; sequence ESEEVGEGSEEQE. Tyrosine 1102 carries the post-translational modification Phosphotyrosine. Serine 1131 and serine 1143 each carry phosphoserine. Residues 1150 to 1159 show a composition bias toward basic and acidic residues; that stretch reads YRQQLSEHSK. Residues 1172-1174 form an interaction with SCRIB region; it reads TEL.

It belongs to the MAGUK family. As to quaternary structure, homodimer. Interacts (via PDZ2 domain) with TJP1/ZO1 (via PDZ2 domain). Interacts with UBN1. Interacts with SCRIB. Interacts with OCLN. Interacts with SAFB in the nucleus. Interacts with USP53 (via the C-terminal region). Interacts with claudins, including CLDN1, CLDN2, CLDN3, CLDN5 and CLDN7. Interacts with CLDN18. Interacts (via N-terminus) with CTNNA1. In terms of processing, phosphorylated.

It localises to the cell junction. The protein localises to the adherens junction. The protein resides in the cell membrane. Its subcellular location is the nucleus. It is found in the tight junction. In terms of biological role, plays a role in tight junctions and adherens junctions. Acts as a positive regulator of RANKL-induced osteoclast differentiation, potentially via mediating downstream transcriptional activity. The polypeptide is Tight junction protein 2 (Canis lupus familiaris (Dog)).